An 860-amino-acid chain; its full sequence is DNA mismatch repair protein MutS (860 aa).

606–613 (GPNMSGKS) is an ATP binding site.

This sequence belongs to the DNA mismatch repair MutS family.

This protein is involved in the repair of mismatches in DNA. It is possible that it carries out the mismatch recognition step. This protein has a weak ATPase activity. The protein is DNA mismatch repair protein MutS of Geobacillus sp. (strain WCH70).